The sequence spans 318 residues: Taste receptor type 2 member 60 (318 aa).

Over 1-7 the chain is Extracellular; that stretch reads MNGDHMV. A helical membrane pass occupies residues 8–28; it reads LGSSMTDEKAIILVIILLLLC. The Cytoplasmic segment spans residues 29–40; the sequence is LVAIAGNCFITA. The chain crosses the membrane as a helical span at residues 41–61; the sequence is ALGMEWVLQRMLLPCDKLLVS. At 62-88 the chain is on the extracellular side; it reads LGASRFCPQWVVMGKTTYVFLYPTAFP. Residues 89 to 109 traverse the membrane as a helical segment; it reads YNPVLRFLAFQWDLLNAATLW. The Cytoplasmic segment spans residues 110–128; sequence FSTWLSVFYCVKIATFTHP. Residues 129-149 form a helical membrane-spanning segment; it reads VFLWLKHKLSEWVPWMLFSSV. Topologically, residues 150–183 are extracellular; it reads GLSSFTTILFFIGNHRVYQSYLRNHLQPWNVTGN. Asn179 carries an N-linked (GlcNAc...) asparagine glycan. Residues 184–204 traverse the membrane as a helical segment; sequence SIWSYCEKFYLFPLKMITWTM. Topologically, residues 205–234 are cytoplasmic; that stretch reads PTAVFFICMILLITSLGRHMKKALLTNSGF. Residues 235 to 255 traverse the membrane as a helical segment; sequence RDPSVQAHIKAMLALLSFAML. At 256–264 the chain is on the extracellular side; it reads FISYFLSLV. The helical transmembrane segment at 265–285 threads the bilayer; sequence FSAAGIFPPLDFKFWVWESVI. At 286–318 the chain is on the cytoplasmic side; it reads YLCAAVHPIILLFSNRRLRAVLKRCRSSRCGTP.

The protein belongs to the G-protein coupled receptor T2R family.

The protein localises to the membrane. Its function is as follows. Receptor that may play a role in the perception of bitterness and is gustducin-linked. May play a role in sensing the chemical composition of the gastrointestinal content. The activity of this receptor may stimulate alpha gustducin, mediate PLC-beta-2 activation and lead to the gating of TRPM5. The polypeptide is Taste receptor type 2 member 60 (TAS2R60) (Pongo pygmaeus (Bornean orangutan)).